We begin with the raw amino-acid sequence, 100 residues long: Urease subunit gamma (100 aa).

The protein belongs to the urease gamma subunit family. Heterotrimer of UreA (gamma), UreB (beta) and UreC (alpha) subunits. Three heterotrimers associate to form the active enzyme.

It is found in the cytoplasm. It catalyses the reaction urea + 2 H2O + H(+) = hydrogencarbonate + 2 NH4(+). Its pathway is nitrogen metabolism; urea degradation; CO(2) and NH(3) from urea (urease route): step 1/1. This is Urease subunit gamma from Arthrobacter sp. (strain FB24).